We begin with the raw amino-acid sequence, 398 residues long: Argininosuccinate synthase (398 aa).

Residues 9 to 17 (AYSGGLDTS) and Ala-36 contribute to the ATP site. The L-citrulline site is built by Tyr-87 and Ser-92. Gly-117 is a binding site for ATP. 3 residues coordinate L-aspartate: Thr-119, Asn-123, and Asp-124. An L-citrulline-binding site is contributed by Asn-123. The L-citrulline site is built by Arg-127, Ser-176, Ser-185, Glu-261, and Tyr-273.

It belongs to the argininosuccinate synthase family. Type 1 subfamily. In terms of assembly, homotetramer.

The protein localises to the cytoplasm. The enzyme catalyses L-citrulline + L-aspartate + ATP = 2-(N(omega)-L-arginino)succinate + AMP + diphosphate + H(+). Its pathway is amino-acid biosynthesis; L-arginine biosynthesis; L-arginine from L-ornithine and carbamoyl phosphate: step 2/3. This chain is Argininosuccinate synthase, found in Desulfotalea psychrophila (strain LSv54 / DSM 12343).